Reading from the N-terminus, the 396-residue chain is Immunoglobulin heavy constant gamma 4 (396 aa).

The CH1 stretch occupies residues alanine 1 to valine 98. Over alanine 1–threonine 347 the chain is Extracellular. Ig-like domains follow at residues proline 6 to glutamate 99, proline 118 to serine 217, and proline 226 to serine 322. A disulfide bridge links cysteine 27 with cysteine 83. The tract at residues glutamate 99–proline 110 is hinge. The interval alanine 111 to lysine 220 is CH2. 2 disulfide bridges follow: cysteine 141-cysteine 201 and cysteine 247-cysteine 305. A glycan (N-linked (GlcNAc...) (complex) asparagine) is linked at asparagine 177. Residues glycine 221–leucine 327 form a CH3 region. Residues isoleucine 348–phenylalanine 368 traverse the membrane as a helical segment. At lysine 369–alanine 396 the chain is on the cytoplasmic side.

As to quaternary structure, immunoglobulins are composed of two identical heavy chains and two identical light chains; disulfide-linked. Glycosylation on Asn-177 is required for interaction with Fc receptors and ability to activate the complement pathway. Post-translationally, (Microbial infection) Deglycosylation on Asn-177 by S.pyogenes EndoS or Endos2 endoglucosidases prevents interaction between immunoglobulin-gamma (IgG) and Fc receptors, impairing ability to activate the complement pathway.

The protein resides in the secreted. The protein localises to the cell membrane. In terms of biological role, constant region of immunoglobulin heavy chains. Immunoglobulins, also known as antibodies, are membrane-bound or secreted glycoproteins produced by B lymphocytes. In the recognition phase of humoral immunity, the membrane-bound immunoglobulins serve as receptors which, upon binding of a specific antigen, trigger the clonal expansion and differentiation of B lymphocytes into immunoglobulins-secreting plasma cells. Secreted immunoglobulins mediate the effector phase of humoral immunity, which results in the elimination of bound antigens. The antigen binding site is formed by the variable domain of one heavy chain, together with that of its associated light chain. Thus, each immunoglobulin has two antigen binding sites with remarkable affinity for a particular antigen. The variable domains are assembled by a process called V-(D)-J rearrangement and can then be subjected to somatic hypermutations which, after exposure to antigen and selection, allow affinity maturation for a particular antigen. The sequence is that of Immunoglobulin heavy constant gamma 4 from Homo sapiens (Human).